A 238-amino-acid polypeptide reads, in one-letter code: Probable transcriptional regulatory protein SMU_1789c (238 aa).

It belongs to the TACO1 family. YeeN subfamily.

The protein resides in the cytoplasm. This chain is Probable transcriptional regulatory protein SMU_1789c, found in Streptococcus mutans serotype c (strain ATCC 700610 / UA159).